The following is a 525-amino-acid chain: Bestrophin homolog 15 (525 aa).

A run of 4 helical transmembrane segments spans residues 36–56 (LFMFIIAFITVSSVYRSNLII), 71–91 (FDQNMDFIPLTFMLGFFVTII), 237–257 (LAYPQVVFLAVRSYFFMALIA), and 273–293 (ILYPTVPFVMSILQFIFVVGW).

It belongs to the anion channel-forming bestrophin (TC 1.A.46) family. Calcium-sensitive chloride channel subfamily. As to quaternary structure, forms oligomers.

The protein localises to the cell membrane. In terms of biological role, forms chloride channels. The protein is Bestrophin homolog 15 (best-15) of Caenorhabditis elegans.